The primary structure comprises 348 residues: Nicotinate-nucleotide--dimethylbenzimidazole phosphoribosyltransferase (348 aa).

Glutamate 317 functions as the Proton acceptor in the catalytic mechanism.

This sequence belongs to the CobT family.

It catalyses the reaction 5,6-dimethylbenzimidazole + nicotinate beta-D-ribonucleotide = alpha-ribazole 5'-phosphate + nicotinate + H(+). The protein operates within nucleoside biosynthesis; alpha-ribazole biosynthesis; alpha-ribazole from 5,6-dimethylbenzimidazole: step 1/2. In terms of biological role, catalyzes the synthesis of alpha-ribazole-5'-phosphate from nicotinate mononucleotide (NAMN) and 5,6-dimethylbenzimidazole (DMB). This chain is Nicotinate-nucleotide--dimethylbenzimidazole phosphoribosyltransferase, found in Clostridioides difficile (strain 630) (Peptoclostridium difficile).